The sequence spans 477 residues: M-phase inducer phosphatase 3 (477 aa).

The disordered stretch occupies residues 1–20 (MSAEFFSSKREEGSLASGPS). N-acetylserine is present on S2. 2 positions are modified to phosphoserine: S20 and S38. Phosphothreonine; by CDK1 is present on T48. Phosphoserine is present on residues S58, S62, and S65. T68 is subject to Phosphothreonine; by CDK1. The residue at position 123 (S123) is a Phosphoserine; by CDK1. At S130 the chain carries Phosphoserine. T131 carries the post-translational modification Phosphothreonine. Residue S169 is modified to Phosphoserine; by CDK1. S192 and S199 each carry phosphoserine; by PLK3. Phosphoserine; by CDK1 is present on S218. At S220 the chain carries Phosphoserine; by CHEK1, CHEK2, BRSK1, MAPK14 AND MARK3. Residues 325 to 432 (LIEKFYIIDC…FFPEYMELCE (108 aa)) enclose the Rhodanese domain. Residue C381 is part of the active site. A Phosphoserine modification is found at S476.

It belongs to the MPI phosphatase family. As to quaternary structure, interacts with MAPK14 and 14-3-3 proteins. When phosphorylated on Ser-130 and/or Thr-131, interacts with PLK1. Interacts with MARK3/C-TAK1. Post-translationally, phosphorylated by CHEK1 and MAPK14 at Ser-220. This phosphorylation creates a binding site for 14-3-3 protein and inhibits the phosphatase. Phosphorylated by PLK4. Phosphorylated by PLK1, leading to activate the phosphatase activity. Phosphorylation by PLK3 at Ser-192 promotes nuclear translocation. Ser-199 is a minor phosphorylation site. Phosphorylation by CDK1 occurs at G2 and G2-M transition and leads to increased activity.

Its subcellular location is the nucleus. It carries out the reaction O-phospho-L-tyrosyl-[protein] + H2O = L-tyrosyl-[protein] + phosphate. In terms of biological role, functions as a dosage-dependent inducer in mitotic control. Tyrosine protein phosphatase required for progression of the cell cycle. When phosphorylated, highly effective in activating G2 cells into prophase. Directly dephosphorylates CDK1 and activates its kinase activity. The chain is M-phase inducer phosphatase 3 (CDC25C) from Bos taurus (Bovine).